Consider the following 336-residue polypeptide: NmrA-like family domain-containing oxidoreductase FrzB (336 aa).

K135 contributes to the NADP(+) binding site.

Belongs to the NmrA-type oxidoreductase family.

The catalysed reaction is 4-{[(2S,5S)-5-[(4-hydroxyphenyl)methyl]-2,5-dihydropyrazin-2-yl]methyl}phenol + 2 NADPH + 2 H(+) = (S,S)-2,5-di-(p-hydroxybenzyl)piperazine + 2 NADP(+). It functions in the pathway secondary metabolite biosynthesis. Its function is as follows. NmrA-like family domain-containing oxidoreductase; part of the gene cluster that mediates the biosynthesis of the alkaloid (-)-FR901483, a potent immunosuppressant that shows efficacy in animal models and a probable inhibitor of purine nucleotide biosynthesis by targeting phosphoribosylpyrophosphate amidotransferase (PPAT). Within the pathway, FrzB catalyzes the reduction of 4-{[(2S,5S)-5-[(4-hydroxyphenyl)methyl]-2,5-dihydropyrazin-2-yl]methyl}phenol to produce the (S,S)-dityrosyl-piperazine intermediate. The biosynthesis of (-)-FR901483 starts with the condensation of two L-tyrosines to yield (S,S)-dityrosyl-piperazine. This process occurs in 3 steps with the non-canonical nonribosomal peptide synthetase FrzA catalyzing the reduction of L-tyrosine into L-tyrosinal, the spontaneous condensation of 2 L-tyrosinal units, and the subsequent reduction by the NmrA-like family domain-containing oxidoreductase FrzB. The cytochrome P450 monooxygenase FrzC then performs coupling between N10 and C1' to morph the piperazine into a 1,4-diazabicyclo[3.2.1]octane spiro-fused to a 2,5-cyclohexadienone. The dienone portion is further reduced to cyclohexanone by the flavin-dependent reductase FrzD. The methyltranserases (MTs) FrzE and FrzF are then involved in the methylation at the C10' amine and the C4 phenolic oxygen, respectively. The order of the two MTs appear to be interchangeable. Cleavage of the C9-N10' bond by the dioxygenase FrzG then leads to formation of a conjugated iminium. In addition to the oxidation of C9, an additional dehydrogenation between C7 and C8 can occur to give a likely shunt product. The next biosynthetic step is the intramolecular aldol condensation catalyzed by the newly identified aldolase FrzH to yield an aza-tricyclic product with the formation of a C9-C3' bond. The short-chain dehydrogenase/reductase FrzI then produces dephospho-(-)-FR901483 that is phosphorylated at C4'-OH into (-)-FR901483 by the phosphotransferase FrzJ. The polypeptide is NmrA-like family domain-containing oxidoreductase FrzB (Cladobotryum sp).